The primary structure comprises 414 residues: uncharacterized protein (414 aa).

A disordered region spans residues Lys-87–Asn-117. Basic and acidic residues predominate over residues Thr-88 to Leu-101. Positions Ser-243–Arg-405 form a coiled coil.

This is an uncharacterized protein from Encephalitozoon cuniculi (strain GB-M1) (Microsporidian parasite).